The following is a 293-amino-acid chain: Phospholipid scramblase 2 (293 aa).

Positions 1 to 39 (MDKQNVQMNPPHPGTNLTGPPGHIGYPGPQAGYAVPPPG) are disordered. The proline-rich domain (PRD) stretch occupies residues 1 to 66 (MDKQNVQMNP…GHPGAPTQVP (66 aa)). At 1-270 (MDKQNVQMNP…IQFPLDLDVK (270 aa)) the chain is on the cytoplasmic side. A Phosphothreonine; by PKC modification is found at Thr-143. Residues Cys-166, Cys-167, Cys-170, and Cys-171 are each lipidated (S-palmitoyl cysteine). A helical transmembrane segment spans residues 271 to 287 (MKAVMLGACFLIDFMFF). Residues 288-293 (EMTRGE) are Extracellular-facing.

This sequence belongs to the phospholipid scramblase family. It depends on Ca(2+) as a cofactor.

The protein localises to the membrane. The enzyme catalyses a 1,2-diacyl-sn-glycero-3-phosphocholine(in) = a 1,2-diacyl-sn-glycero-3-phosphocholine(out). Functionally, may catalyze calcium-induced ATP-independent rapid bidirectional and non-specific movement of phospholipids (lipid scrambling or lipid flip-flop) between the inner and outer leaflet of the plasma membrane. This Bos taurus (Bovine) protein is Phospholipid scramblase 2.